A 270-amino-acid polypeptide reads, in one-letter code: Acyl-[acyl-carrier-protein]--UDP-N-acetylglucosamine O-acyltransferase (270 aa).

This sequence belongs to the transferase hexapeptide repeat family. LpxA subfamily. In terms of assembly, homotrimer.

The protein localises to the cytoplasm. The catalysed reaction is a (3R)-hydroxyacyl-[ACP] + UDP-N-acetyl-alpha-D-glucosamine = a UDP-3-O-[(3R)-3-hydroxyacyl]-N-acetyl-alpha-D-glucosamine + holo-[ACP]. The protein operates within glycolipid biosynthesis; lipid IV(A) biosynthesis; lipid IV(A) from (3R)-3-hydroxytetradecanoyl-[acyl-carrier-protein] and UDP-N-acetyl-alpha-D-glucosamine: step 1/6. Involved in the biosynthesis of lipid A, a phosphorylated glycolipid that anchors the lipopolysaccharide to the outer membrane of the cell. The chain is Acyl-[acyl-carrier-protein]--UDP-N-acetylglucosamine O-acyltransferase from Sinorhizobium fredii (strain NBRC 101917 / NGR234).